Reading from the N-terminus, the 1012-residue chain is Ankyrin repeat- and BTB/POZ domain-containing protein 3-B (1012 aa).

A helical membrane pass occupies residues 160 to 180 (ILSWTISVNCIAASLSALSMY). ANK repeat units lie at residues 511-540 (QGMT…DINS), 557-586 (RQAT…NVEG), and 595-624 (YTET…DPMI). Residues 831–897 (SDVTFLVEGK…LYCGGTDALH (67 aa)) enclose the BTB domain.

It is found in the membrane. The protein is Ankyrin repeat- and BTB/POZ domain-containing protein 3-B (abtb3b) of Danio rerio (Zebrafish).